The primary structure comprises 590 residues: EGF-like and EMI domain-containing protein 1 (590 aa).

Positions 1 to 23 (MTSPLCFWCFCVWAAANWPPGSA) are cleaved as a signal peptide. An EMI domain is found at 44 to 104 (LSRPCAQAFI…RCCPGWIQWD (61 aa)). One can recognise an EGF-like 1 domain in the interval 105-145 (DEPGCFSSLSSLGTHFSGRECSYQDTRQCLCSQGFHGPHCQ). 11 disulfide bridges follow: C109–C125, C135–C144, C168–C179, C175–C188, C190–C203, C209–C219, C215–C228, C230–C243, C249–C260, C256–C269, and C271–C284. The EGF-like 2; calcium-binding domain occupies 164–204 (NVDECAVVNGGCQQRCINTLGTFHCECDTGYRRHADERTCI). Residues 205 to 244 (KTDPCAGANGCAHLCQTENGMARCACHAGYQLSEDKKACE) enclose the EGF-like 3 domain. One can recognise an EGF-like 4; calcium-binding domain in the interval 245–285 (DINECAGELAPCAHHCVNSKGSFTCTCHPGFELGADRKHCY). The tract at residues 393-424 (RLAQNPPQPFPYLDPSLTASYEDEDNDDADSE) is disordered. Acidic residues predominate over residues 413 to 424 (YEDEDNDDADSE). The EGF-like 5 domain maps to 445-481 (FGLDCSLSCEDCMNGGRCQEGKSGCLCPAEWTGLICN). 3 cysteine pairs are disulfide-bonded: C449–C462, C456–C469, and C471–C480.

The chain is EGF-like and EMI domain-containing protein 1 (Egfem1) from Mus musculus (Mouse).